A 270-amino-acid chain; its full sequence is Coiled-coil domain-containing protein 3 (270 aa).

A signal peptide spans 1 to 21; it reads MLRQLLLAALCLAGPPAPARA. A glycan (N-linked (GlcNAc...) asparagine) is linked at N100. Residues 188–251 are a coiled coil; that stretch reads SVQKALFEEE…NQKLSEKLAA (64 aa).

As to quaternary structure, homodimer. As to expression, expressed in umbilical vein endothelial cells (HUVEC), and at lower levels in aortic smooth muscle cells (HASMC).

The protein resides in the secreted. Negatively regulates TNF-alpha-induced pro-inflammatory response in endothelial cells (ECs) via inhibition of TNF-alpha-induced NF-kappaB activation in ECs. Positively regulates lipid accumulation in adipose cells. The chain is Coiled-coil domain-containing protein 3 (CCDC3) from Homo sapiens (Human).